A 508-amino-acid chain; its full sequence is Maturase K (508 aa).

Belongs to the intron maturase 2 family. MatK subfamily.

The protein resides in the plastid. It is found in the chloroplast. Its function is as follows. Usually encoded in the trnK tRNA gene intron. Probably assists in splicing its own and other chloroplast group II introns. This is Maturase K from Abies bracteata (Bristle-cone fir).